Consider the following 295-residue polypeptide: MSWLSKLMPSGIRTENTPAKKRSVPEGLWEKCSNCGSALYGPELEENLEVCPKCDHHMAIRARARLAALFDVDSPPTEIAAQLGPVDVLKFKDQKKYGERIKASQKSSGEYDALIAMRGMLKGNPLVAAAFDFAFMGGSMGSVVGERFARAAEVALEVGCPFVCFSASGGARMQEGLFSLMQMAKTSAALGRLREAGLPYISVLTHPTTGGVSASFAMLGDINIAEPHALIGFAGPRVIEQTVRETLPEGFQRSEFLLDHGAIDQICDRRDMRDRIAELTTMMMRQPHPQDADAA.

Residues 1–20 form a disordered region; the sequence is MSWLSKLMPSGIRTENTPAK. In terms of domain architecture, CoA carboxyltransferase N-terminal spans 28-295; that stretch reads LWEKCSNCGS…QPHPQDADAA (268 aa). 4 residues coordinate Zn(2+): Cys32, Cys35, Cys51, and Cys54. Residues 32 to 54 form a C4-type zinc finger; the sequence is CSNCGSALYGPELEENLEVCPKC.

Belongs to the AccD/PCCB family. As to quaternary structure, acetyl-CoA carboxylase is a heterohexamer composed of biotin carboxyl carrier protein (AccB), biotin carboxylase (AccC) and two subunits each of ACCase subunit alpha (AccA) and ACCase subunit beta (AccD). Zn(2+) is required as a cofactor.

It is found in the cytoplasm. It carries out the reaction N(6)-carboxybiotinyl-L-lysyl-[protein] + acetyl-CoA = N(6)-biotinyl-L-lysyl-[protein] + malonyl-CoA. It participates in lipid metabolism; malonyl-CoA biosynthesis; malonyl-CoA from acetyl-CoA: step 1/1. Functionally, component of the acetyl coenzyme A carboxylase (ACC) complex. Biotin carboxylase (BC) catalyzes the carboxylation of biotin on its carrier protein (BCCP) and then the CO(2) group is transferred by the transcarboxylase to acetyl-CoA to form malonyl-CoA. In Xanthomonas campestris pv. campestris (strain B100), this protein is Acetyl-coenzyme A carboxylase carboxyl transferase subunit beta.